Here is an 87-residue protein sequence, read N- to C-terminus: Small ribosomal subunit protein bS20 (87 aa).

Residues 1 to 26 are disordered; the sequence is MANIKSAKKRAVQSEKARKHNASRRS.

The protein belongs to the bacterial ribosomal protein bS20 family.

In terms of biological role, binds directly to 16S ribosomal RNA. This chain is Small ribosomal subunit protein bS20, found in Klebsiella pneumoniae (strain 342).